Reading from the N-terminus, the 196-residue chain is Glycerol-3-phosphate acyltransferase (196 aa).

The next 5 helical transmembrane spans lie at 1 to 21, 53 to 73, 76 to 96, 115 to 135, and 141 to 161; these read MGFIIGFLLSVFGYLLGSILF, KYGALVFLLDAFKGFLIAILD, YIDPSSLWFGIVMVSPVIGHI, VVFGISPLLALKMFLVWAFVF, and VSLASITSVLVGYFLFLEGDF.

Belongs to the PlsY family. In terms of assembly, probably interacts with PlsX.

The protein localises to the cell inner membrane. It carries out the reaction an acyl phosphate + sn-glycerol 3-phosphate = a 1-acyl-sn-glycero-3-phosphate + phosphate. Its pathway is lipid metabolism; phospholipid metabolism. Catalyzes the transfer of an acyl group from acyl-phosphate (acyl-PO(4)) to glycerol-3-phosphate (G3P) to form lysophosphatidic acid (LPA). This enzyme utilizes acyl-phosphate as fatty acyl donor, but not acyl-CoA or acyl-ACP. The chain is Glycerol-3-phosphate acyltransferase from Hydrogenobaculum sp. (strain Y04AAS1).